Reading from the N-terminus, the 168-residue chain is 6,7-dimethyl-8-ribityllumazine synthase (168 aa).

5-amino-6-(D-ribitylamino)uracil contacts are provided by residues Trp31, 65-67 (SFE), and 90-92 (NVI). 95–96 (ET) is a (2S)-2-hydroxy-3-oxobutyl phosphate binding site. His98 (proton donor) is an active-site residue. Residue Phe123 coordinates 5-amino-6-(D-ribitylamino)uracil. Arg137 contributes to the (2S)-2-hydroxy-3-oxobutyl phosphate binding site.

It belongs to the DMRL synthase family.

It carries out the reaction (2S)-2-hydroxy-3-oxobutyl phosphate + 5-amino-6-(D-ribitylamino)uracil = 6,7-dimethyl-8-(1-D-ribityl)lumazine + phosphate + 2 H2O + H(+). Its pathway is cofactor biosynthesis; riboflavin biosynthesis; riboflavin from 2-hydroxy-3-oxobutyl phosphate and 5-amino-6-(D-ribitylamino)uracil: step 1/2. Functionally, catalyzes the formation of 6,7-dimethyl-8-ribityllumazine by condensation of 5-amino-6-(D-ribitylamino)uracil with 3,4-dihydroxy-2-butanone 4-phosphate. This is the penultimate step in the biosynthesis of riboflavin. This Christiangramia forsetii (strain DSM 17595 / CGMCC 1.15422 / KT0803) (Gramella forsetii) protein is 6,7-dimethyl-8-ribityllumazine synthase.